The chain runs to 586 residues: Thioredoxin domain-containing protein 3 (586 aa).

Positions 10-116 (LQSVVNSQNL…NRKVITLIDE (107 aa)) constitute a Thioredoxin domain. C39 and C42 are disulfide-bonded. NDK regions lie at residues 157–254 (MAII…VLEE), 312–452 (VQTT…STLA), and 453–586 (LIKP…NPEN).

In the C-terminal section; belongs to the NDK family. In terms of assembly, monomer. Testis-specific. Expressed mainly in round spermatids.

It is found in the cytoplasm. Probably required during the final stages of sperm tail maturation in the testis and/or epididymis, where extensive disulfide bonding of fibrous sheath (FS) proteins occurs. In vitro, it has neither nucleoside diphosphate kinase (NDPK) activity nor reducing activity on disulfide bonds. Exhibits a 3'-5' exonuclease activity with a preference for single-stranded DNA, suggesting roles in DNA proofreading and repair. The sequence is that of Thioredoxin domain-containing protein 3 (Nme8) from Mus musculus (Mouse).